A 239-amino-acid polypeptide reads, in one-letter code: tRNA (guanine-N(7)-)-methyltransferase (239 aa).

The S-adenosyl-L-methionine site is built by Glu68, Glu93, Asp120, and Asp143. The active site involves Asp143. Substrate-binding positions include Lys147, Asp180, and 217 to 220 (TKFE).

This sequence belongs to the class I-like SAM-binding methyltransferase superfamily. TrmB family.

The catalysed reaction is guanosine(46) in tRNA + S-adenosyl-L-methionine = N(7)-methylguanosine(46) in tRNA + S-adenosyl-L-homocysteine. It participates in tRNA modification; N(7)-methylguanine-tRNA biosynthesis. Catalyzes the formation of N(7)-methylguanine at position 46 (m7G46) in tRNA. The sequence is that of tRNA (guanine-N(7)-)-methyltransferase from Vibrio parahaemolyticus serotype O3:K6 (strain RIMD 2210633).